A 60-amino-acid chain; its full sequence is Sperm protamine P1 (60 aa).

A disordered region spans residues methionine 1–tyrosine 60.

The protein belongs to the protamine P1 family. In terms of tissue distribution, testis.

The protein resides in the nucleus. The protein localises to the chromosome. Functionally, protamines substitute for histones in the chromatin of sperm during the haploid phase of spermatogenesis. They compact sperm DNA into a highly condensed, stable and inactive complex. This chain is Sperm protamine P1 (PRM1), found in Petrogale concinna (Nabarlek).